Consider the following 265-residue polypeptide: Tryptophan synthase alpha chain (265 aa).

Active-site proton acceptor residues include Glu-49 and Asp-60.

It belongs to the TrpA family. As to quaternary structure, tetramer of two alpha and two beta chains.

It carries out the reaction (1S,2R)-1-C-(indol-3-yl)glycerol 3-phosphate + L-serine = D-glyceraldehyde 3-phosphate + L-tryptophan + H2O. It functions in the pathway amino-acid biosynthesis; L-tryptophan biosynthesis; L-tryptophan from chorismate: step 5/5. Its function is as follows. The alpha subunit is responsible for the aldol cleavage of indoleglycerol phosphate to indole and glyceraldehyde 3-phosphate. This is Tryptophan synthase alpha chain from Polynucleobacter asymbioticus (strain DSM 18221 / CIP 109841 / QLW-P1DMWA-1) (Polynucleobacter necessarius subsp. asymbioticus).